A 159-amino-acid polypeptide reads, in one-letter code: 3-hydroxyacyl-[acyl-carrier-protein] dehydratase FabZ (159 aa).

The active site involves His58.

This sequence belongs to the thioester dehydratase family. FabZ subfamily.

It is found in the cytoplasm. The catalysed reaction is a (3R)-hydroxyacyl-[ACP] = a (2E)-enoyl-[ACP] + H2O. Functionally, involved in unsaturated fatty acids biosynthesis. Catalyzes the dehydration of short chain beta-hydroxyacyl-ACPs and long chain saturated and unsaturated beta-hydroxyacyl-ACPs. This chain is 3-hydroxyacyl-[acyl-carrier-protein] dehydratase FabZ, found in Helicobacter pylori (strain P12).